A 222-amino-acid polypeptide reads, in one-letter code: MAEKPKLHYSNARGSMESIRWLLAAAGVELEEKFLESAEDLDKLRNDGSLLFQQVPMVEIDGMKLVQTRAILNYIASKYNLYGKDMKERALIDMYTEGIVDLTEMILLLLICQPEERDAKTALVKEKIKNRYFPAFEKVLKSHRQDYLVGNKLSWADIHLVELFYYVEELDSSLISSFPLLKALKTRISNLPTVKKFLQPGSQRKPPMDEKSLEEARKIFRF.

A2 is subject to N-acetylalanine. The region spanning 3–83 (EKPKLHYSNA…YIASKYNLYG (81 aa)) is the GST N-terminal domain. The residue at position 4 (K4) is an N6-succinyllysine. Residues Y9, R45, 54–55 (QV), and 67–68 (QT) contribute to the glutathione site. The GST C-terminal domain occupies 85-208 (DMKERALIDM…QPGSQRKPPM (124 aa)).

The protein belongs to the GST superfamily. Alpha family. Homodimer. As to expression, expression not detected.

It is found in the cytoplasm. It catalyses the reaction RX + glutathione = an S-substituted glutathione + a halide anion + H(+). In Homo sapiens (Human), this protein is Glutathione S-transferase A5 (GSTA5).